Consider the following 114-residue polypeptide: UPF0212 protein UNCMA_00570 (114 aa).

It belongs to the UPF0212 family.

This Methanocella arvoryzae (strain DSM 22066 / NBRC 105507 / MRE50) protein is UPF0212 protein UNCMA_00570.